The following is a 286-amino-acid chain: Plasma membrane ascorbate-dependent reductase CYBRD1 (286 aa).

At 1 to 7 (MAMEGYR) the chain is on the cytoplasmic side. A helical transmembrane segment spans residues 8–32 (GFLGLLVSALLVGFLSVIFVLIWVL). A Cytochrome b561 domain is found at 15-220 (SALLVGFLSV…FGALIFWIVT (206 aa)). Over 33–47 (HFREGLGWDGGALEF) the chain is Extracellular. The chain crosses the membrane as a helical span at residues 48 to 69 (NWHPVLAVTGFVFIQGIAIIVY). 3 residues coordinate heme b: histidine 50, arginine 70, and lysine 79. Over 70-78 (RLPWTWKCS) the chain is Cytoplasmic. Residues lysine 79 and lysine 83 each coordinate L-ascorbate. A helical transmembrane segment spans residues 79 to 105 (KFLMKSIHAGLNAVAAILAIISVVAVF). Position 86 (histidine 86) interacts with heme b. Over 106-118 (DYHNVRKIPHMYS) the chain is Extracellular. Histidine 108 contributes to the Fe(3+) binding site. Residues 115–118 (HMYS) and histidine 120 each bind heme b. A helical transmembrane segment spans residues 119-144 (LHSWVGLTVLILYIQQLVVGFFIFLL). The Cytoplasmic segment spans residues 145–151 (PWAPPSL). An L-ascorbate-binding site is contributed by arginine 152. The chain crosses the membrane as a helical span at residues 152 to 179 (RAIVMPIHVYSGLLLFGTVIATVLMGVT). 2 residues coordinate heme b: histidine 159 and glutamate 180. Residues 180-197 (EKLFFVLKNPSYHSFPPE) lie on the Extracellular side of the membrane. Residues 198 to 222 (GVFTNTLGLLILVFGALIFWIVTRP) form a helical membrane-spanning segment. Residues 223 to 286 (QWKRPREPGS…LVDTGQRSTM (64 aa)) are Cytoplasmic-facing. Heme b is bound at residue lysine 225. Position 232 is a phosphoserine (serine 232). Threonine 285 bears the Phosphothreonine mark.

In terms of assembly, homodimer. The cofactor is heme b. As to expression, highly expressed in all regions of the small intestine and colon studied in suckling animals. However, after weaning, when iron absorption declines significantly, strong expression is retained only in the duodenum. Also expressed in respiratory epithelium.

Its subcellular location is the cell membrane. It is found in the apical cell membrane. It catalyses the reaction Fe(3+)(out) + L-ascorbate(in) = monodehydro-L-ascorbate radical(in) + Fe(2+)(out) + H(+). The enzyme catalyses Cu(2+)(out) + L-ascorbate(in) = Cu(+)(out) + monodehydro-L-ascorbate radical(in) + H(+). The catalysed reaction is monodehydro-L-ascorbate radical(out) + L-ascorbate(in) = monodehydro-L-ascorbate radical(in) + L-ascorbate(out). Plasma membrane reductase that uses cytoplasmic ascorbate as an electron donor to reduce extracellular Fe(3+) into Fe(2+). Probably functions in dietary iron absorption at the brush border of duodenal enterocytes by producing Fe(2+), the divalent form of iron that can be transported into enterocytes. It is also able to reduce extracellular monodehydro-L-ascorbate and may be involved in extracellular ascorbate regeneration by erythrocytes in blood. May also act as a ferrireductase in airway epithelial cells. May also function as a cupric transmembrane reductase. The sequence is that of Plasma membrane ascorbate-dependent reductase CYBRD1 from Rattus norvegicus (Rat).